Here is a 123-residue protein sequence, read N- to C-terminus: Small ribosomal subunit protein uS12 (123 aa).

Aspartate 89 is modified (3-methylthioaspartic acid).

It belongs to the universal ribosomal protein uS12 family. As to quaternary structure, part of the 30S ribosomal subunit. Contacts proteins S8 and S17. May interact with IF1 in the 30S initiation complex.

With S4 and S5 plays an important role in translational accuracy. Functionally, interacts with and stabilizes bases of the 16S rRNA that are involved in tRNA selection in the A site and with the mRNA backbone. Located at the interface of the 30S and 50S subunits, it traverses the body of the 30S subunit contacting proteins on the other side and probably holding the rRNA structure together. The combined cluster of proteins S8, S12 and S17 appears to hold together the shoulder and platform of the 30S subunit. The chain is Small ribosomal subunit protein uS12 from Brucella abortus (strain S19).